Consider the following 226-residue polypeptide: Gap junction beta-2 protein (226 aa).

Residues 2–13 (DWGALQTILGGV) lie within the membrane without spanning it. Residues 14-20 (NKHSTSI) lie on the Cytoplasmic side of the membrane. The helical transmembrane segment at 21–40 (GKIWLTVLFIFRIMILVVAA) threads the bilayer. Over 41–73 (KEVWGDEQADFVCNTLQPGCKNVCYDHYFPISH) the chain is Extracellular. The Ca(2+) site is built by Glu-42, Gly-45, and Glu-47. Cystine bridges form between Cys-53/Cys-180, Cys-60/Cys-174, and Cys-64/Cys-169. A helical transmembrane segment spans residues 74–94 (IRLWALQLIFVSTPALLVAMH). Topologically, residues 95-135 (VAYRRHEKKRKFIKGEIKSEFKDIEEIKTQKVRIEGSLWWT) are cytoplasmic. Residues 136–156 (YTSSIFFRVIFEAAFMYVFYV) traverse the membrane as a helical segment. Over 157 to 189 (MYDGFSMQRLVKCNAWPCPNTVDCFVSRPTEKT) the chain is Extracellular. Residues 190 to 210 (VFTVFMIAVSGICILLNVTEL) traverse the membrane as a helical segment. Over 211-226 (CYLLIRYCSGRSKKPV) the chain is Cytoplasmic.

Belongs to the connexin family. Beta-type (group I) subfamily. In terms of assembly, a hemichannel or connexon is composed of a hexamer of connexins. A functional gap junction is formed by the apposition of two hemichannels. Forms heteromeric channels with GJB4. Interacts with CNST.

The protein resides in the cell membrane. It localises to the cell junction. It is found in the gap junction. Its function is as follows. Structural component of gap junctions. Gap junctions are dodecameric channels that connect the cytoplasm of adjoining cells. They are formed by the docking of two hexameric hemichannels, one from each cell membrane. Small molecules and ions diffuse from one cell to a neighboring cell via the central pore. This is Gap junction beta-2 protein (GJB2) from Pongo pygmaeus (Bornean orangutan).